A 147-amino-acid polypeptide reads, in one-letter code: Hemoglobin subunit epsilon (147 aa).

The region spanning 3 to 147 is the Globin domain; sequence HFTAEEKAAV…VAIALAHKYH (145 aa). 2 positions are modified to phosphoserine: S14 and S51. 2 residues coordinate heme b: H64 and H93.

This sequence belongs to the globin family. As to quaternary structure, heterotetramer of two alpha chains and two epsilon chains in early embryonic hemoglobin Gower-2; two zeta chains and two epsilon chains in early embryonic hemoglobin Gower-1. In terms of tissue distribution, red blood cells.

The epsilon chain is a beta-type chain of early mammalian embryonic hemoglobin. The protein is Hemoglobin subunit epsilon (HBE1) of Pan troglodytes (Chimpanzee).